The chain runs to 206 residues: Dehydration-responsive element-binding protein 2D (206 aa).

A disordered region spans residues 13-40 (ANKKQRTVQASSRKGCMRGKGGPDNASC). The AP2/ERF DNA-binding region spans 41 to 98 (TYKGVRQRTWGKWVAEIREPNRGARLWLGTFDTSREAALAYDSAARKLYGPEAHLNLP). Residues 102–139 (RSYPKTASSPASQTTPSSNTGGKSSSDSESPCSSNEMS) form a disordered region. The segment covering 107–139 (TASSPASQTTPSSNTGGKSSSDSESPCSSNEMS) has biased composition (low complexity).

It belongs to the AP2/ERF transcription factor family. ERF subfamily.

The protein localises to the nucleus. Putative transcriptional activator that binds specifically to the DNA sequence 5'-[AG]CCGAC-3'. Binding to the C-repeat/DRE element mediates high salinity-inducible transcription. In Arabidopsis thaliana (Mouse-ear cress), this protein is Dehydration-responsive element-binding protein 2D (DREB2D).